The following is a 102-amino-acid chain: Large ribosomal subunit protein bL21 (102 aa).

It belongs to the bacterial ribosomal protein bL21 family. As to quaternary structure, part of the 50S ribosomal subunit. Contacts protein L20.

Its function is as follows. This protein binds to 23S rRNA in the presence of protein L20. The chain is Large ribosomal subunit protein bL21 from Geobacillus thermodenitrificans (strain NG80-2).